Consider the following 264-residue polypeptide: Tryptophan synthase alpha chain (264 aa).

Active-site proton acceptor residues include Glu45 and Asp56.

Belongs to the TrpA family. In terms of assembly, tetramer of two alpha and two beta chains.

It carries out the reaction (1S,2R)-1-C-(indol-3-yl)glycerol 3-phosphate + L-serine = D-glyceraldehyde 3-phosphate + L-tryptophan + H2O. The protein operates within amino-acid biosynthesis; L-tryptophan biosynthesis; L-tryptophan from chorismate: step 5/5. In terms of biological role, the alpha subunit is responsible for the aldol cleavage of indoleglycerol phosphate to indole and glyceraldehyde 3-phosphate. This is Tryptophan synthase alpha chain from Leptospira interrogans serogroup Icterohaemorrhagiae serovar copenhageni (strain Fiocruz L1-130).